The primary structure comprises 206 residues: Mediator of RNA polymerase II transcription subunit 19 (206 aa).

A disordered region spans residues G171–E206. Residues S183 to L195 are compositionally biased toward polar residues.

Belongs to the Mediator complex subunit 19 family. In terms of assembly, component of the Mediator complex.

It is found in the nucleus. Component of the Mediator complex, a coactivator involved in the regulated transcription of nearly all RNA polymerase II-dependent genes. Mediator functions as a bridge to convey information from gene-specific regulatory proteins to the basal RNA polymerase II transcription machinery. Mediator is recruited to promoters by direct interactions with regulatory proteins and serves as a scaffold for the assembly of a functional preinitiation complex with RNA polymerase II and the general transcription factors. In Kluyveromyces lactis (strain ATCC 8585 / CBS 2359 / DSM 70799 / NBRC 1267 / NRRL Y-1140 / WM37) (Yeast), this protein is Mediator of RNA polymerase II transcription subunit 19 (ROX3).